The sequence spans 270 residues: Aliphatic sulfonates import ATP-binding protein SsuB 3 (270 aa).

One can recognise an ABC transporter domain in the interval 17 to 238 (LAVQNLKKAF…ARGSHRLAAL (222 aa)). Position 49–56 (49–56 (GRSGCGKS)) interacts with ATP.

This sequence belongs to the ABC transporter superfamily. Aliphatic sulfonates importer (TC 3.A.1.17.2) family. In terms of assembly, the complex is composed of two ATP-binding proteins (SsuB), two transmembrane proteins (SsuC) and a solute-binding protein (SsuA).

The protein resides in the cell inner membrane. It carries out the reaction ATP + H2O + aliphatic sulfonate-[sulfonate-binding protein]Side 1 = ADP + phosphate + aliphatic sulfonateSide 2 + [sulfonate-binding protein]Side 1.. Part of the ABC transporter complex SsuABC involved in aliphatic sulfonates import. Responsible for energy coupling to the transport system. The polypeptide is Aliphatic sulfonates import ATP-binding protein SsuB 3 (Pseudomonas syringae pv. tomato (strain ATCC BAA-871 / DC3000)).